A 378-amino-acid polypeptide reads, in one-letter code: Ribosomal RNA large subunit methyltransferase G (378 aa).

It belongs to the methyltransferase superfamily. RlmG family.

It is found in the cytoplasm. It carries out the reaction guanosine(1835) in 23S rRNA + S-adenosyl-L-methionine = N(2)-methylguanosine(1835) in 23S rRNA + S-adenosyl-L-homocysteine + H(+). Functionally, specifically methylates the guanine in position 1835 (m2G1835) of 23S rRNA. The sequence is that of Ribosomal RNA large subunit methyltransferase G from Escherichia coli O6:K15:H31 (strain 536 / UPEC).